Reading from the N-terminus, the 207-residue chain is Dephospho-CoA kinase (207 aa).

The 196-residue stretch at 12-207 folds into the DPCK domain; the sequence is LIGITGMIGG…LYSTLLGKML (196 aa). An ATP-binding site is contributed by 20 to 25; that stretch reads GGGKST.

The protein belongs to the CoaE family.

It is found in the cytoplasm. It catalyses the reaction 3'-dephospho-CoA + ATP = ADP + CoA + H(+). The protein operates within cofactor biosynthesis; coenzyme A biosynthesis; CoA from (R)-pantothenate: step 5/5. In terms of biological role, catalyzes the phosphorylation of the 3'-hydroxyl group of dephosphocoenzyme A to form coenzyme A. This chain is Dephospho-CoA kinase, found in Leptospira interrogans serogroup Icterohaemorrhagiae serovar copenhageni (strain Fiocruz L1-130).